We begin with the raw amino-acid sequence, 209 residues long: Uracil phosphoribosyltransferase (209 aa).

Residues R79, R104, and 131–139 contribute to the 5-phospho-alpha-D-ribose 1-diphosphate site; that span reads DPMLATGGS. Uracil is bound by residues I194 and 199–201; that span reads GDA. D200 contacts 5-phospho-alpha-D-ribose 1-diphosphate.

The protein belongs to the UPRTase family. The cofactor is Mg(2+).

It carries out the reaction UMP + diphosphate = 5-phospho-alpha-D-ribose 1-diphosphate + uracil. Its pathway is pyrimidine metabolism; UMP biosynthesis via salvage pathway; UMP from uracil: step 1/1. With respect to regulation, allosterically activated by GTP. Functionally, catalyzes the conversion of uracil and 5-phospho-alpha-D-ribose 1-diphosphate (PRPP) to UMP and diphosphate. The polypeptide is Uracil phosphoribosyltransferase (Natranaerobius thermophilus (strain ATCC BAA-1301 / DSM 18059 / JW/NM-WN-LF)).